The sequence spans 345 residues: Protein RecA (345 aa).

66–73 (GPESSGKT) contributes to the ATP binding site.

The protein belongs to the RecA family.

Its subcellular location is the cytoplasm. Can catalyze the hydrolysis of ATP in the presence of single-stranded DNA, the ATP-dependent uptake of single-stranded DNA by duplex DNA, and the ATP-dependent hybridization of homologous single-stranded DNAs. It interacts with LexA causing its activation and leading to its autocatalytic cleavage. The chain is Protein RecA from Frankia casuarinae (strain DSM 45818 / CECT 9043 / HFP020203 / CcI3).